A 161-amino-acid chain; its full sequence is Tick receptor for ospA (161 aa).

Interacts with ospA protein from B.burgdorferi. Post-translationally, glycosylated. Specifically expressed in gut. Localizes predominantly in the intercellular spaces and luminal surface of the gut. In the gut, it localizes along tight junctions. Not expressed in salivary gland or hemolymph.

The protein localises to the cell membrane. In terms of biological role, serves as a receptor for ospA protein of B.burgdorferi, the Lyme disease agent. Required for spirochetal colonization. Essential for pathogen adherence to the vector. The sequence is that of Tick receptor for ospA (TROSPA) from Ixodes scapularis (Black-legged tick).